Reading from the N-terminus, the 335-residue chain is Nod factor export ATP-binding protein I (335 aa).

A compositionally biased stretch (basic and acidic residues) spans 1–10 (MTQEVPRRLE). Residues 1–22 (MTQEVPRRLEPSPFEWKGDAGP) form a disordered region. Positions 37–267 (IDLASVTKSY…KIGCQVIEIY (231 aa)) constitute an ABC transporter domain. Residue 69–76 (GPNGAGKS) coordinates ATP.

Belongs to the ABC transporter superfamily. Lipooligosaccharide exporter (TC 3.A.1.102) family. As to quaternary structure, the complex is composed of two ATP-binding proteins (NodI) and two transmembrane proteins (NodJ).

The protein resides in the cell inner membrane. In terms of biological role, part of the ABC transporter complex NodIJ involved in the export of the nodulation factors (Nod factors), the bacterial signal molecules that induce symbiosis and subsequent nodulation induction. Nod factors are LCO (lipo-chitin oligosaccharide), a modified beta-1,4-linked N-acetylglucosamine oligosaccharide. This subunit is responsible for energy coupling to the transport system. This Rhizobium meliloti (Ensifer meliloti) protein is Nod factor export ATP-binding protein I.